A 338-amino-acid polypeptide reads, in one-letter code: Plasminogen (338 aa).

One can recognise a Kringle 5 domain in the interval 9 to 88 (CMLGIGKGYQ…LFDYCDVPQC (80 aa)). Intrachain disulfides connect Cys9–Cys88, Cys30–Cys71, Cys59–Cys83, Cys95–Cys213, Cys105–Cys113, Cys135–Cys151, Cys227–Cys294, Cys257–Cys273, and Cys284–Cys312. Positions 109–336 (IVGGCVAIAH…FINWIERIMQ (228 aa)) constitute a Peptidase S1 domain. Ser125 is modified (phosphoserine). Residues His150 and Asp193 each act as charge relay system in the active site. The active-site Charge relay system is Ser288.

This sequence belongs to the peptidase S1 family. Plasminogen subfamily. As to quaternary structure, interacts with CSPG4 and AMOT. Interacts (via the Kringle domains) with HRG; the interaction tethers PLG to the cell surface and enhances its activation. Interacts (via Kringle 4 domain) with ADA; the interaction stimulates PLG activation when in complex with DPP4. Angiostatin: Interacts with ATP5F1A; the interaction inhibits most of the angiogenic effects of angiostatin.

It is found in the secreted. The catalysed reaction is Preferential cleavage: Lys-|-Xaa &gt; Arg-|-Xaa, higher selectivity than trypsin. Converts fibrin into soluble products.. With respect to regulation, converted into plasmin by plasminogen activators, both plasminogen and its activator being bound to fibrin. Activated with catalytic amounts of streptokinase. Functionally, plasmin dissolves the fibrin of blood clots and acts as a proteolytic factor in a variety of other processes including embryonic development, tissue remodeling, tumor invasion, and inflammation. In ovulation, weakens the walls of the Graafian follicle. It activates the urokinase-type plasminogen activator, collagenases and several complement zymogens, such as C1, C4 and C5. Cleavage of fibronectin and laminin leads to cell detachment and apoptosis. Also cleaves fibrin, thrombospondin and von Willebrand factor. Its role in tissue remodeling and tumor invasion may be modulated by CSPG4. Binds to cells. The protein is Plasminogen (PLG) of Equus caballus (Horse).